A 695-amino-acid polypeptide reads, in one-letter code: Protein ACTIVITY OF BC1 COMPLEX KINASE 7, chloroplastic (695 aa).

The 331-residue stretch at 259 to 589 folds into the Protein kinase domain; the sequence is EFEEQPIAAA…VQEIRKQADD (331 aa). ATP contacts are provided by residues 265-273 and Lys-287; that span reads IAAASLGQV. The Proton acceptor role is filled by Asp-421. 2 helical membrane-spanning segments follow: residues 633 to 653 and 659 to 679; these read TILQMATMYTVLGGTLLNIGV and GSQLVANGSFIGAGIFMLLVL.

It belongs to the protein kinase superfamily. ADCK protein kinase family. In terms of tissue distribution, mostly expressed in leaves and flowers, and, to a lower extent, in roots.

The protein resides in the plastid. It localises to the chloroplast thylakoid membrane. It is found in the chloroplast. Its subcellular location is the plastoglobule. It catalyses the reaction L-seryl-[protein] + ATP = O-phospho-L-seryl-[protein] + ADP + H(+). The catalysed reaction is L-threonyl-[protein] + ATP = O-phospho-L-threonyl-[protein] + ADP + H(+). Functionally, involved in resistance to oxidative stress. Influences responses to reactive oxygen species (ROS) production. Regulates plastoglobules formation in thylakoids. Together with OSA1, regulates iron distribution within the chloroplast and mediates the oxidative stress response. Together with ABC1K8, influences chloroplast lipid synthesis/accumulation and modulates chloroplast membrane composition in response to stress. In Arabidopsis thaliana (Mouse-ear cress), this protein is Protein ACTIVITY OF BC1 COMPLEX KINASE 7, chloroplastic.